The sequence spans 1181 residues: Putative primase (1181 aa).

The interval 1141–1181 is disordered; it reads RSHSTMVEHDMDDDESTNKKQELEEEDEECIDIDEYNNERF. Acidic residues predominate over residues 1163 to 1181; sequence LEEEDEECIDIDEYNNERF.

It belongs to the eukaryotic-type primase small subunit family.

Functionally, synthesizes small RNA primers for the Okazaki fragments on both template strands at replication forks during viral DNA synthesis. This Magallana gigas (Pacific oyster) protein is Putative primase.